The following is a 160-amino-acid chain: Nucleotide-binding protein BP2916 (160 aa).

The protein belongs to the YajQ family.

Its function is as follows. Nucleotide-binding protein. This chain is Nucleotide-binding protein BP2916, found in Bordetella pertussis (strain Tohama I / ATCC BAA-589 / NCTC 13251).